Consider the following 392-residue polypeptide: FK506-binding protein 4 (392 aa).

2 disordered regions span residues 58-116 (NPEL…NEID) and 161-284 (GNYV…PKTK). Acidic residues-rich tracts occupy residues 73 to 86 (DGLE…EQEA), 104 to 116 (SESE…NEID), and 172 to 219 (SDSD…DASD). A phosphoserine mark is found at Ser-80 and Ser-82. Basic and acidic residues-rich tracts occupy residues 220 to 234 (IESR…DEKK) and 252 to 279 (SAKP…ESKP). The PPIase FKBP-type domain occupies 306-392 (GTRVGMRYVG…TFDVKLVSMK (87 aa)).

This sequence belongs to the FKBP-type PPIase family. FKBP3/4 subfamily. In terms of assembly, binds to histones H3 and H4. Interacts with NOP53.

The protein localises to the nucleus. It carries out the reaction [protein]-peptidylproline (omega=180) = [protein]-peptidylproline (omega=0). In terms of biological role, PPIase that acts as a histone chaperone. Histone proline isomerase that increases the rate of cis-trans isomerization at 'Pro-17' (H3P16), 'Pro-31' (H3P30) and 'Pro-39 (H3P38) on the histone H3 N-terminal tail. H3P16 and H3P30 are the major proline targets with little activity shown against H3P38. H3P38 isomerization influences SET2-mediated H3K36 methylation thereby regulating gene expression. This chain is FK506-binding protein 4, found in Saccharomyces cerevisiae (strain ATCC 204508 / S288c) (Baker's yeast).